The primary structure comprises 67 residues: Large ribosomal subunit protein bL31 (67 aa).

Zn(2+)-binding residues include Cys16, Cys18, Cys36, and Cys39.

It belongs to the bacterial ribosomal protein bL31 family. Type A subfamily. Part of the 50S ribosomal subunit. Requires Zn(2+) as cofactor.

Its function is as follows. Binds the 23S rRNA. This chain is Large ribosomal subunit protein bL31, found in Syntrophomonas wolfei subsp. wolfei (strain DSM 2245B / Goettingen).